The primary structure comprises 156 residues: ATP synthase subunit b (156 aa).

A helical membrane pass occupies residues L7 to P27.

Belongs to the ATPase B chain family. In terms of assembly, F-type ATPases have 2 components, F(1) - the catalytic core - and F(0) - the membrane proton channel. F(1) has five subunits: alpha(3), beta(3), gamma(1), delta(1), epsilon(1). F(0) has three main subunits: a(1), b(2) and c(10-14). The alpha and beta chains form an alternating ring which encloses part of the gamma chain. F(1) is attached to F(0) by a central stalk formed by the gamma and epsilon chains, while a peripheral stalk is formed by the delta and b chains.

It localises to the cell inner membrane. In terms of biological role, f(1)F(0) ATP synthase produces ATP from ADP in the presence of a proton or sodium gradient. F-type ATPases consist of two structural domains, F(1) containing the extramembraneous catalytic core and F(0) containing the membrane proton channel, linked together by a central stalk and a peripheral stalk. During catalysis, ATP synthesis in the catalytic domain of F(1) is coupled via a rotary mechanism of the central stalk subunits to proton translocation. Component of the F(0) channel, it forms part of the peripheral stalk, linking F(1) to F(0). This chain is ATP synthase subunit b, found in Ralstonia pickettii (strain 12J).